Here is a 192-residue protein sequence, read N- to C-terminus: Putative acetyltransferase YjbC (192 aa).

The 139-residue stretch at 1–139 (MNWYEKLSEY…MEILYWSPKT (139 aa)) folds into the N-acetyltransferase domain.

It localises to the cytoplasm. This Bacillus subtilis (strain 168) protein is Putative acetyltransferase YjbC (yjbC).